A 92-amino-acid chain; its full sequence is Protein S100-A12 (92 aa).

EF-hand domains lie at 13 to 48 (NIFH…LQNT) and 49 to 84 (KDQP…VLKT). His16 is a binding site for Cu cation. A Zn(2+)-binding site is contributed by His16. Ca(2+) contacts are provided by Ser19 and His24. Asp26 is a binding site for Cu cation. Residue Asp26 participates in Zn(2+) binding. Residues Thr27 and Glu32 each contribute to the Ca(2+) site. The interval 38 to 53 (TKELPKTLQNTKDQPT) is hinge domain. Ca(2+) contacts are provided by Asp62, Asp64, Asp66, and Glu73. Cu cation is bound by residues His86 and His90. Zn(2+) contacts are provided by His86 and His90.

Belongs to the S-100 family. In terms of assembly, homodimer. Homooligomer (tetramer or hexamer) in the presence of calcium, zinc and copper ions. Interacts with AGER and both calcium and zinc are essential for the interaction. Interacts with CACYBP in a calcium-dependent manner. As to expression, up-regulated in stimulated inflammatory effector cells.

It is found in the secreted. Its subcellular location is the cytoplasm. The protein localises to the cytoskeleton. The protein resides in the cell membrane. Functionally, S100A12 is a calcium-, zinc- and copper-binding protein which plays a prominent role in the regulation of inflammatory processes and immune response. Its pro-inflammatory activity involves recruitment of leukocytes, promotion of cytokine and chemokine production, and regulation of leukocyte adhesion and migration. Acts as an alarmin or a danger associated molecular pattern (DAMP) molecule and stimulates innate immune cells via binding to receptor for advanced glycation endproducts (AGER). Binding to AGER activates the MAP-kinase and NF-kappa-B signaling pathways leading to production of pro-inflammatory cytokines and up-regulation of cell adhesion molecules ICAM1 and VCAM1. Acts as a monocyte and mast cell chemoattractant. Can stimulate mast cell degranulation and activation which generates chemokines, histamine and cytokines inducing further leukocyte recruitment to the sites of inflammation. Can inhibit the activity of matrix metalloproteinases; MMP2, MMP3 and MMP9 by chelating Zn(2+) from their active sites. The sequence is that of Protein S100-A12 (S100A12) from Bos taurus (Bovine).